The primary structure comprises 367 residues: D-alanine--D-alanine ligase (367 aa).

One can recognise an ATP-grasp domain in the interval 145–351 (KRLLRDAGLP…QPALMDALIA (207 aa)). 174–229 (HAVGCSELFIKPANLGSSVGISKARTPQEFAAACDLALRFDGKILIERCISPVREI) is an ATP binding site. The Mg(2+) site is built by aspartate 306, glutamate 318, and asparagine 320.

The protein belongs to the D-alanine--D-alanine ligase family. The cofactor is Mg(2+). Mn(2+) is required as a cofactor.

The protein resides in the cytoplasm. It carries out the reaction 2 D-alanine + ATP = D-alanyl-D-alanine + ADP + phosphate + H(+). It functions in the pathway cell wall biogenesis; peptidoglycan biosynthesis. Cell wall formation. The chain is D-alanine--D-alanine ligase from Bradyrhizobium sp. (strain BTAi1 / ATCC BAA-1182).